The primary structure comprises 201 residues: Small ribosomal subunit protein uS4c (201 aa).

A disordered region spans residues 19–38; that stretch reads PGLTSKSPKAGSDLRNQLRS. Residues 89-149 enclose the S4 RNA-binding domain; sequence MRLDNILFRL…DEQKSRALIQ (61 aa).

Belongs to the universal ribosomal protein uS4 family. As to quaternary structure, part of the 30S ribosomal subunit. Contacts protein S5. The interaction surface between S4 and S5 is involved in control of translational fidelity.

Its subcellular location is the plastid. It localises to the chloroplast. In terms of biological role, one of the primary rRNA binding proteins, it binds directly to 16S rRNA where it nucleates assembly of the body of the 30S subunit. Functionally, with S5 and S12 plays an important role in translational accuracy. This is Small ribosomal subunit protein uS4c (rps4) from Platanus occidentalis (Sycamore).